Reading from the N-terminus, the 605-residue chain is Leucine-rich repeat-containing protein 40 (605 aa).

Positions 1 to 26 (MSRFRRGGKAPDPLSGFRAPKEQEPA) are disordered. 19 LRR repeats span residues 83 to 104 (DLTKLILASNKLQLLSEDISLL), 106 to 127 (ALVVLDIHDNQIVSLPCAIKEL), 129 to 151 (NLQKLNISHNKIKQLPKELQHLQ), 152 to 173 (NLKSLLLQHNQLEELPDSIGHL), 175 to 196 (ILEELDVSNNCLRSISSSVGQL), 198 to 219 (GLVKFNLSSNKLTALPTEIGKM), 221 to 242 (NLKQLDCTSNLLENVPASVAGM), 244 to 265 (SLEQLYLRQNKLTYLPELPFLT), 266 to 287 (KLKELHVGNNQIQTLGPEHLQN), 290 to 311 (SLSVLELRYNKLKVLPEEISLL), 313 to 335 (GLERLDLSNNDLGSLPCTLGSLP), 336 to 357 (NLKSLQLEGNPLRGIRRDILNK), 429 to 450 (FITTVNFSKNQLTEVPARIVEM), 453 to 475 (SVCDVNLGFNKISSISLNLCMLL), 476 to 497 (KLTHIDMRNNVLTSLPSEMEAM), 499 to 520 (RLQSVILSFNRFKHFPDVLYRI), 522 to 543 (TLETILISSNQIGSIDPTQLIK), 546 to 567 (KLSTLDLQNNDLLQIPPALGNC), and 569 to 590 (SLRALHLEGNPFRNPRAAILAK).

This chain is Leucine-rich repeat-containing protein 40 (lrrc40), found in Xenopus tropicalis (Western clawed frog).